A 253-amino-acid chain; its full sequence is Tryptophan synthase alpha chain (253 aa).

Active-site proton acceptor residues include glutamate 47 and aspartate 58.

The protein belongs to the TrpA family. Tetramer of two alpha and two beta chains.

The enzyme catalyses (1S,2R)-1-C-(indol-3-yl)glycerol 3-phosphate + L-serine = D-glyceraldehyde 3-phosphate + L-tryptophan + H2O. The protein operates within amino-acid biosynthesis; L-tryptophan biosynthesis; L-tryptophan from chorismate: step 5/5. The alpha subunit is responsible for the aldol cleavage of indoleglycerol phosphate to indole and glyceraldehyde 3-phosphate. In Desulforapulum autotrophicum (strain ATCC 43914 / DSM 3382 / VKM B-1955 / HRM2) (Desulfobacterium autotrophicum), this protein is Tryptophan synthase alpha chain.